The chain runs to 138 residues: Holo-[acyl-carrier-protein] synthase (138 aa).

2 residues coordinate Mg(2+): aspartate 8 and glutamate 56.

The protein belongs to the P-Pant transferase superfamily. AcpS family. The cofactor is Mg(2+).

Its subcellular location is the cytoplasm. It carries out the reaction apo-[ACP] + CoA = holo-[ACP] + adenosine 3',5'-bisphosphate + H(+). Its function is as follows. Transfers the 4'-phosphopantetheine moiety from coenzyme A to a Ser of acyl-carrier-protein. The chain is Holo-[acyl-carrier-protein] synthase from Clostridium novyi (strain NT).